A 421-amino-acid chain; its full sequence is Cyclin-A1 (421 aa).

The disordered stretch occupies residues 1-21 (MHRQSSKSGVALPPVGQGPDA).

Belongs to the cyclin family. Cyclin AB subfamily. Interacts with INCA1 and KLHDC9. Interacts with the CDK2 and CDC2 protein kinases to form a serine/threonine kinase holoenzyme complex. The cyclin subunit imparts substrate specificity to the complex. Found in a complex with CDK2, CABLES1 and CCNE1. In terms of processing, polyubiquitinated via 'Lys-11'-linked ubiquitin by the anaphase-promoting complex (APC/C), leading to its degradation by the proteasome. Deubiquitinated and stabilized by USP37 enables entry into S phase. Ubiquitinated during the G1 phase by the SCF(FBXO31) complex, leading to its proteasomal degradation. Testis and ovaries.

The protein localises to the nucleus. The protein resides in the cytoplasm. It localises to the cytoskeleton. Its subcellular location is the spindle. May be involved in the control of the cell cycle at the G1/S (start) and G2/M (mitosis) transitions. May primarily function in the control of the germline meiotic cell cycle and additionally in the control of mitotic cell cycle in some somatic cells. This Mus musculus (Mouse) protein is Cyclin-A1 (Ccna1).